The chain runs to 379 residues: MKHLALIGSTGSIGRQVLQVVRSIPDTFIIETLAAYGRNQEALISQIREFNPRVVAVREETTYKELRKLFPHIEILLGEEGLVSVATEPSVTMTIVASSGIDALPAVIAAIRQKKTIALANKESLVAAGELVTTLARENGVQILPIDSEHNALFQCLEGRDSSTIKKLLLTASGGPLRNKSKEELQKVSLQEVLRHPVWNMGPKITVDSSTLVNKGLEIIEAFWLFGLEAVEIEAVIHPQSLVHGMVEFCDGTILSVMNPPSMLFPIQHVLTFPERSPAIGPGFDFLSNRTLEFFPIDEDRFPSVHLAKRVLLEKGSMGCFFNGANEALVHRFLAGEISWHQIVPKLQALVDQHRVQSCLSLEEILSVDAEARARAQEC.

7 residues coordinate NADPH: threonine 10, glycine 11, serine 12, isoleucine 13, arginine 38, asparagine 39, and asparagine 121. Lysine 122 is a binding site for 1-deoxy-D-xylulose 5-phosphate. Glutamate 123 provides a ligand contact to NADPH. A Mn(2+)-binding site is contributed by aspartate 147. 1-deoxy-D-xylulose 5-phosphate-binding residues include serine 148, glutamate 149, serine 173, and histidine 196. Position 149 (glutamate 149) interacts with Mn(2+). Residue glycine 202 participates in NADPH binding. The 1-deoxy-D-xylulose 5-phosphate site is built by serine 209, asparagine 214, lysine 215, and glutamate 218. Residue glutamate 218 participates in Mn(2+) binding.

This sequence belongs to the DXR family. Mg(2+) serves as cofactor. Requires Mn(2+) as cofactor.

The enzyme catalyses 2-C-methyl-D-erythritol 4-phosphate + NADP(+) = 1-deoxy-D-xylulose 5-phosphate + NADPH + H(+). It participates in isoprenoid biosynthesis; isopentenyl diphosphate biosynthesis via DXP pathway; isopentenyl diphosphate from 1-deoxy-D-xylulose 5-phosphate: step 1/6. Functionally, catalyzes the NADPH-dependent rearrangement and reduction of 1-deoxy-D-xylulose-5-phosphate (DXP) to 2-C-methyl-D-erythritol 4-phosphate (MEP). The chain is 1-deoxy-D-xylulose 5-phosphate reductoisomerase from Chlamydia trachomatis serovar A (strain ATCC VR-571B / DSM 19440 / HAR-13).